The sequence spans 166 residues: Small ribosomal subunit protein uS5 (166 aa).

Residues 11-74 (LNEKLIAVNR…EKARRNMFTI (64 aa)) form the S5 DRBM domain.

This sequence belongs to the universal ribosomal protein uS5 family. As to quaternary structure, part of the 30S ribosomal subunit. Contacts proteins S4 and S8.

In terms of biological role, with S4 and S12 plays an important role in translational accuracy. Located at the back of the 30S subunit body where it stabilizes the conformation of the head with respect to the body. The polypeptide is Small ribosomal subunit protein uS5 (Aliivibrio fischeri (strain ATCC 700601 / ES114) (Vibrio fischeri)).